Consider the following 1179-residue polypeptide: DNA-directed RNA polymerase subunit beta' (1179 aa).

Positions 60, 62, 75, and 78 each coordinate Zn(2+). Mg(2+) is bound by residues Asp-450, Asp-452, and Asp-454. 4 residues coordinate Zn(2+): Cys-791, Cys-865, Cys-872, and Cys-875.

It belongs to the RNA polymerase beta' chain family. The RNAP catalytic core consists of 2 alpha, 1 beta, 1 beta' and 1 omega subunit. When a sigma factor is associated with the core the holoenzyme is formed, which can initiate transcription. The cofactor is Mg(2+). It depends on Zn(2+) as a cofactor.

It catalyses the reaction RNA(n) + a ribonucleoside 5'-triphosphate = RNA(n+1) + diphosphate. In terms of biological role, DNA-dependent RNA polymerase catalyzes the transcription of DNA into RNA using the four ribonucleoside triphosphates as substrates. The protein is DNA-directed RNA polymerase subunit beta' of Alkaliphilus oremlandii (strain OhILAs) (Clostridium oremlandii (strain OhILAs)).